Consider the following 403-residue polypeptide: Phosphoglycerate kinase (403 aa).

Residues aspartate 21 to asparagine 23, arginine 36, histidine 59 to arginine 62, arginine 119, and arginine 154 each bind substrate. ATP is bound by residues lysine 207, glycine 299, glutamate 330, and glycine 357–alanine 360.

This sequence belongs to the phosphoglycerate kinase family. As to quaternary structure, monomer.

The protein resides in the cytoplasm. It carries out the reaction (2R)-3-phosphoglycerate + ATP = (2R)-3-phospho-glyceroyl phosphate + ADP. It participates in carbohydrate degradation; glycolysis; pyruvate from D-glyceraldehyde 3-phosphate: step 2/5. The polypeptide is Phosphoglycerate kinase (Chlamydia abortus (strain DSM 27085 / S26/3) (Chlamydophila abortus)).